The chain runs to 198 residues: Recombination protein RecR (198 aa).

The C4-type zinc finger occupies 57-72; that stretch reads CSVCCNLTDQDPCQIC. The region spanning 80–175 is the Toprim domain; sequence STICVVQEPR…KVTRIARGLP (96 aa).

It belongs to the RecR family.

In terms of biological role, may play a role in DNA repair. It seems to be involved in an RecBC-independent recombinational process of DNA repair. It may act with RecF and RecO. The chain is Recombination protein RecR from Symbiobacterium thermophilum (strain DSM 24528 / JCM 14929 / IAM 14863 / T).